Here is a 447-residue protein sequence, read N- to C-terminus: UDP-N-acetylglucosamine 1-carboxyvinyltransferase (447 aa).

27–28 (KN) lines the phosphoenolpyruvate pocket. Arginine 97 contributes to the UDP-N-acetyl-alpha-D-glucosamine binding site. Cysteine 121 acts as the Proton donor in catalysis. The residue at position 121 (cysteine 121) is a 2-(S-cysteinyl)pyruvic acid O-phosphothioketal. UDP-N-acetyl-alpha-D-glucosamine contacts are provided by residues 126 to 130 (RPVDL), aspartate 314, and valine 336.

This sequence belongs to the EPSP synthase family. MurA subfamily.

The protein resides in the cytoplasm. It catalyses the reaction phosphoenolpyruvate + UDP-N-acetyl-alpha-D-glucosamine = UDP-N-acetyl-3-O-(1-carboxyvinyl)-alpha-D-glucosamine + phosphate. It functions in the pathway cell wall biogenesis; peptidoglycan biosynthesis. Cell wall formation. Adds enolpyruvyl to UDP-N-acetylglucosamine. The chain is UDP-N-acetylglucosamine 1-carboxyvinyltransferase from Nostoc sp. (strain PCC 7120 / SAG 25.82 / UTEX 2576).